Here is a 142-residue protein sequence, read N- to C-terminus: Large ribosomal subunit protein uL11 (142 aa).

The protein belongs to the universal ribosomal protein uL11 family. In terms of assembly, part of the ribosomal stalk of the 50S ribosomal subunit. Interacts with L10 and the large rRNA to form the base of the stalk. L10 forms an elongated spine to which L12 dimers bind in a sequential fashion forming a multimeric L10(L12)X complex. Post-translationally, one or more lysine residues are methylated.

In terms of biological role, forms part of the ribosomal stalk which helps the ribosome interact with GTP-bound translation factors. The polypeptide is Large ribosomal subunit protein uL11 (Aliivibrio fischeri (strain MJ11) (Vibrio fischeri)).